The chain runs to 96 residues: Pterin-4-alpha-carbinolamine dehydratase (96 aa).

This sequence belongs to the pterin-4-alpha-carbinolamine dehydratase family.

The protein resides in the spore wall. The catalysed reaction is (4aS,6R)-4a-hydroxy-L-erythro-5,6,7,8-tetrahydrobiopterin = (6R)-L-erythro-6,7-dihydrobiopterin + H2O. Has a role in spore wall formation. The sequence is that of Pterin-4-alpha-carbinolamine dehydratase (omt2) from Schizosaccharomyces pombe (strain 972 / ATCC 24843) (Fission yeast).